The primary structure comprises 66 residues: Large ribosomal subunit protein bL31 (66 aa).

4 residues coordinate Zn(2+): Cys16, Cys18, Cys36, and Cys39.

It belongs to the bacterial ribosomal protein bL31 family. Type A subfamily. Part of the 50S ribosomal subunit. It depends on Zn(2+) as a cofactor.

Functionally, binds the 23S rRNA. In Pelobacter propionicus (strain DSM 2379 / NBRC 103807 / OttBd1), this protein is Large ribosomal subunit protein bL31.